Here is a 430-residue protein sequence, read N- to C-terminus: Dihydroorotase (430 aa).

Histidine 57 and histidine 59 together coordinate Zn(2+). Substrate contacts are provided by residues 59–61 and asparagine 91; that span reads HLR. Residues aspartate 151, histidine 178, and histidine 231 each contribute to the Zn(2+) site. Asparagine 277 serves as a coordination point for substrate. A Zn(2+)-binding site is contributed by aspartate 304. The active site involves aspartate 304. Residues histidine 308 and 322–323 contribute to the substrate site; that span reads PG.

This sequence belongs to the metallo-dependent hydrolases superfamily. DHOase family. Class I DHOase subfamily. Zn(2+) serves as cofactor.

The enzyme catalyses (S)-dihydroorotate + H2O = N-carbamoyl-L-aspartate + H(+). It functions in the pathway pyrimidine metabolism; UMP biosynthesis via de novo pathway; (S)-dihydroorotate from bicarbonate: step 3/3. Catalyzes the reversible cyclization of carbamoyl aspartate to dihydroorotate. The protein is Dihydroorotase of Mycobacterium bovis (strain ATCC BAA-935 / AF2122/97).